We begin with the raw amino-acid sequence, 948 residues long: Phosphoenolpyruvate carboxylase (948 aa).

Residues H138 and K610 contribute to the active site.

The protein belongs to the PEPCase type 1 family. Requires Mg(2+) as cofactor.

The catalysed reaction is oxaloacetate + phosphate = phosphoenolpyruvate + hydrogencarbonate. In terms of biological role, forms oxaloacetate, a four-carbon dicarboxylic acid source for the tricarboxylic acid cycle. This chain is Phosphoenolpyruvate carboxylase, found in Streptococcus sanguinis (strain SK36).